The chain runs to 212 residues: Deoxyribose-phosphate aldolase (212 aa).

Aspartate 90 (proton donor/acceptor) is an active-site residue. Lysine 151 functions as the Schiff-base intermediate with acetaldehyde in the catalytic mechanism. Residue lysine 176 is the Proton donor/acceptor of the active site.

Belongs to the DeoC/FbaB aldolase family. DeoC type 1 subfamily.

The protein localises to the cytoplasm. The catalysed reaction is 2-deoxy-D-ribose 5-phosphate = D-glyceraldehyde 3-phosphate + acetaldehyde. It functions in the pathway carbohydrate degradation; 2-deoxy-D-ribose 1-phosphate degradation; D-glyceraldehyde 3-phosphate and acetaldehyde from 2-deoxy-alpha-D-ribose 1-phosphate: step 2/2. Its function is as follows. Catalyzes a reversible aldol reaction between acetaldehyde and D-glyceraldehyde 3-phosphate to generate 2-deoxy-D-ribose 5-phosphate. This Halobacterium salinarum (strain ATCC 29341 / DSM 671 / R1) protein is Deoxyribose-phosphate aldolase.